Here is a 657-residue protein sequence, read N- to C-terminus: Leishmanolysin (657 aa).

The signal sequence occupies residues M1–A41. Residues H42–V102 constitute a propeptide, activation peptide. Residues G44 to A611 are Extracellular-facing. N-linked (GlcNAc...) asparagine glycosylation occurs at N107. 2 cysteine pairs are disulfide-bonded: C127-C144 and C193-C232. H266 is a Zn(2+) binding site. The active site involves E267. H270 contacts Zn(2+). The N-linked (GlcNAc...) asparagine glycan is linked to N302. Cystine bridges form between C316–C388, C395–C458, C408–C427, C417–C492, C469–C513, C518–C568, and C538–C561. H336 is a binding site for Zn(2+). 5 N-linked (GlcNAc...) asparagine glycosylation sites follow: N399, N409, N445, N466, and N501. The helical transmembrane segment at T612–V632 threads the bilayer. Over S633 to E657 the chain is Cytoplasmic.

It belongs to the peptidase M8 family. Zn(2+) is required as a cofactor.

Its subcellular location is the membrane. It carries out the reaction Preference for hydrophobic residues at P1 and P1' and basic residues at P2' and P3'. A model nonapeptide is cleaved at -Ala-Tyr-|-Leu-Lys-Lys-.. Functionally, has an integral role during the infection of macrophages in the mammalian host. The sequence is that of Leishmanolysin (mspC) from Leishmania tropica.